A 287-amino-acid chain; its full sequence is Diaminopimelate epimerase (287 aa).

Substrate-binding residues include N13, Q46, and N66. The active-site Proton donor is C75. Substrate contacts are provided by residues 76–77, N166, N199, and 217–218; these read GN and ER. The active-site Proton acceptor is the C226. 227-228 contacts substrate; sequence GT.

The protein belongs to the diaminopimelate epimerase family. As to quaternary structure, homodimer.

The protein localises to the cytoplasm. It carries out the reaction (2S,6S)-2,6-diaminopimelate = meso-2,6-diaminopimelate. It participates in amino-acid biosynthesis; L-lysine biosynthesis via DAP pathway; DL-2,6-diaminopimelate from LL-2,6-diaminopimelate: step 1/1. Catalyzes the stereoinversion of LL-2,6-diaminopimelate (L,L-DAP) to meso-diaminopimelate (meso-DAP), a precursor of L-lysine and an essential component of the bacterial peptidoglycan. The chain is Diaminopimelate epimerase from Paraburkholderia xenovorans (strain LB400).